The following is a 367-amino-acid chain: Cyclin-Y-like protein 1 (367 aa).

Phosphoserine occurs at positions 73, 111, and 118. In terms of domain architecture, Cyclin N-terminal spans 186–291 (EYFKHDPEHK…FLELLQFNIN (106 aa)). Ser-352 bears the Phosphoserine mark.

It belongs to the cyclin family. Cyclin Y subfamily. As to quaternary structure, interacts with CDK16; this interaction mutually increases the stability of CDK16 and CCNYL1 and increases the kinase activity of CDK16. As to expression, highly expressed in the testis. Largely restricted to germ cells in the testis.

The protein resides in the cell membrane. In terms of biological role, key regulator of Wnt signaling implicated in various biological processes including male fertility, embryonic neurogenesis and cortex development. Activates the cyclin-dependent kinase CDK16, and promotes sperm maturation. In Mus musculus (Mouse), this protein is Cyclin-Y-like protein 1.